Here is a 1108-residue protein sequence, read N- to C-terminus: Unconventional myosin-Ie (1108 aa).

In terms of domain architecture, Myosin motor spans 19–692 (SGVDDMVLLS…SLFLLEEMRE (674 aa)). 112–119 (GESGAGKT) provides a ligand contact to ATP. An actin-binding region spans residues 581-591 (PHYIRCIKPNE). In terms of domain architecture, IQ spans 695-724 (YDGYARVIQKSWRKFVARKKYVQMREEASD). The region spanning 730-922 (KERRRNSINR…NKVLQVSIGP (193 aa)) is the TH1 domain. A disordered region spans residues 919 to 966 (SIGPGLPKNSRPTRRNTTQNTGYSSGTQNANYPVRAAPPPPGYHQNGV). Residues 933 to 949 (RNTTQNTGYSSGTQNAN) are compositionally biased toward polar residues. Serine 980 and serine 1002 each carry phosphoserine. A disordered region spans residues 993–1053 (ARPPLPRQQS…KPQPKPKPQV (61 aa)). Polar residues predominate over residues 999–1013 (RQQSTSSDRVSQTPE). A compositionally biased stretch (pro residues) spans 1035–1052 (RPPPAGGRPKPQPKPKPQ). Residues 1051 to 1108 (PQVPQCKALYAYDAQDTDELSFNANDIIDIIKEDPSGWWTGRLRGKQGLFPNNYVTKI) enclose the SH3 domain.

Belongs to the TRAFAC class myosin-kinesin ATPase superfamily. Myosin family. As to quaternary structure, interacts with CALM and F-actin. Interacts (via SH3 domain) with SYNJ1, DNM1 and DNM2. Interacts with ARL14EP. Interacts with CARMIL1. As to expression, expressed in the immune system. In the kidney, predominantly expressed in the glomerulus, including podocytes.

Its subcellular location is the cytoplasm. The protein resides in the cytoskeleton. The protein localises to the cytoplasmic vesicle. It localises to the clathrin-coated vesicle. It is found in the cell junction. Functionally, actin-based motor molecule with ATPase activity. Unconventional myosins serve in intracellular movements. Their highly divergent tails bind to membranous compartments, which are then moved relative to actin filaments. Binds to membranes containing anionic phospholipids via its tail domain. Involved in clathrin-mediated endocytosis and intracellular movement of clathrin-coated vesicles. Required for normal morphology of the glomerular basement membrane, normal development of foot processes by kidney podocytes and normal kidney function. In dendritic cells, may control the movement of class II-containing cytoplasmic vesicles along the actin cytoskeleton by connecting them with the actin network via ARL14EP and ARL14. In Homo sapiens (Human), this protein is Unconventional myosin-Ie (MYO1E).